The primary structure comprises 319 residues: Beta-ketoacyl-[acyl-carrier-protein] synthase III (319 aa).

Catalysis depends on residues Cys113 and His246. Residues Gln247 to Arg251 are ACP-binding. Asn276 is an active-site residue.

This sequence belongs to the thiolase-like superfamily. FabH family. As to quaternary structure, homodimer.

Its subcellular location is the cytoplasm. The catalysed reaction is malonyl-[ACP] + acetyl-CoA + H(+) = 3-oxobutanoyl-[ACP] + CO2 + CoA. The protein operates within lipid metabolism; fatty acid biosynthesis. Functionally, catalyzes the condensation reaction of fatty acid synthesis by the addition to an acyl acceptor of two carbons from malonyl-ACP. Catalyzes the first condensation reaction which initiates fatty acid synthesis and may therefore play a role in governing the total rate of fatty acid production. Possesses both acetoacetyl-ACP synthase and acetyl transacylase activities. Its substrate specificity determines the biosynthesis of branched-chain and/or straight-chain of fatty acids. This chain is Beta-ketoacyl-[acyl-carrier-protein] synthase III, found in Ehrlichia canis (strain Jake).